Consider the following 631-residue polypeptide: Tumor protein p73 (631 aa).

The interval M1–E43 is transactivation. Disordered stretches follow at residues S23–E43 and S69–Y113. T24 carries the post-translational modification Phosphothreonine; by PLK1. Position 25 is a phosphotyrosine; by SRC and HCK (Y25). Polar residues-rich tracts occupy residues Q30–E43 and P86–T100. Y91 carries the phosphotyrosine; by ABL1 modification. The tract at residues F123–R302 is DNA-binding. Residues C186, H189, C250, and C254 each contribute to the Zn(2+) site. Polar residues predominate over residues A306–G315. A disordered region spans residues A306–T334. An interaction with HIPK2 region spans residues K337–L372. Residues K337–V378 form an oligomerization region. Residues P477–Y481 carry the PPxY motif motif. The region spanning P479–S545 is the SAM domain. K622 is covalently cross-linked (Glycyl lysine isopeptide (Lys-Gly) (interchain with G-Cter in SUMO); alternate). Residue K622 forms a Glycyl lysine isopeptide (Lys-Gly) (interchain with G-Cter in SUMO2); alternate linkage.

Belongs to the p53 family. Found in a complex with p53/TP53 and CABLES1. The C-terminal oligomerization domain binds to the ABL1 tyrosine kinase SH3 domain. Interacts with HECW2, HIPK2, RANBP9 and WWOX. Interacts (via SAM domain) with FBXO45 (via B30.2/SPRY domain). Interacts with YAP1 (phosphorylated form). Interacts with HCK (via SH3 domain); this inhibits TP73 activity and degradation. Interacts (via SAM domain) with NQO1; this interaction is NADH-dependent, stabilizes TP73 in response to oxidative stress and protects it from ubiquitin-independent degradation by the 20S proteasome. The cofactor is Zn(2+). Sumoylated on Lys-622, which potentiates proteasomal degradation but does not affect transcriptional activity. Post-translationally, phosphorylation by PLK1 and PLK3 inhibits the transcription regulator activity and pro-apoptotic function. Higher levels of phosphorylation seen in striatal neurons of. mutant huntingtin (htt) transgenic mice. In terms of processing, polyubiquitinated by RCHY1/PIRH2; leading to its degradation by the proteasome. As to expression, found in striatal neurons of mutant huntingtin (htt) transgenic mice (at protein level). Isoform 1 is expressed in the nasal epithelium, the vomeronasal organ, the hippocampus and the hypothalamus.

Its subcellular location is the nucleus. It is found in the cytoplasm. Functionally, participates in the apoptotic response to DNA damage. Isoforms containing the transactivation domain are pro-apoptotic, isoforms lacking the domain are anti-apoptotic and block the function of p53 and transactivating p73 isoforms. May be a tumor suppressor protein. Is an activator of FOXJ1 expression, essential for the positive regulation of lung ciliated cell differentiation. The protein is Tumor protein p73 (Tp73) of Mus musculus (Mouse).